The chain runs to 233 residues: DNA repair protein RecO (233 aa).

Belongs to the RecO family.

Involved in DNA repair and RecF pathway recombination. This chain is DNA repair protein RecO, found in Pseudomonas paraeruginosa (strain DSM 24068 / PA7) (Pseudomonas aeruginosa (strain PA7)).